A 369-amino-acid polypeptide reads, in one-letter code: Pulmonary surfactant-associated protein D (369 aa).

The signal sequence occupies residues 1 to 20; sequence MLLLPLSVLLLLTQPWRSLG. S-nitrosocysteine is present on residues Cys35 and Cys40. The segment at 41-215 is disordered; it reads SPPEDGLPGR…ERGAKGESGL (175 aa). One can recognise a Collagen-like domain in the interval 46 to 216; that stretch reads GLPGRDGRDG…RGAKGESGLA (171 aa). The span at 47-65 shows a compositional bias: basic and acidic residues; it reads LPGRDGRDGREGPRGEKGD. A 4-hydroxyproline modification is found at Pro78. Lys87 is subject to 5-hydroxylysine. Residue Asn90 is glycosylated (N-linked (GlcNAc...) asparagine). Pro96 is subject to 4-hydroxyproline. The residue at position 99 (Lys99) is a 5-hydroxylysine. Gly residues predominate over residues 139–148; it reads GPKGGVGAPG. A 4-hydroxyproline mark is found at Pro165 and Pro171. Low complexity predominate over residues 165–191; it reads PGEPGAPGRAGAPGPAGAIGPQGPSGA. Residues 198 to 210 show a composition bias toward basic and acidic residues; sequence KGDRGTPGERGAK. Positions 217-248 form a coiled coil; it reads EVNALRQRVGILEGQLQRLQNAFSQYKKAMLF. A C-type lectin domain is found at 254–369; that stretch reads VGEKIFKTEG…GEQRLVICEF (116 aa). Disulfide bonds link Cys275–Cys367 and Cys345–Cys359.

This sequence belongs to the SFTPD family. As to quaternary structure, oligomeric complex of 4 set of homotrimers. Post-translationally, hydroxylation on proline residues within the sequence motif, GXPG, is most likely to be 4-hydroxy as this fits the requirement for 4-hydroxylation in vertebrates. In terms of processing, S-nitrosylation at Cys-35 and Cys-40 alters the quaternary structure which results in a pro-inflammatory chemoattractive signaling activity with macrophages.

The protein resides in the secreted. The protein localises to the extracellular space. It localises to the extracellular matrix. Its subcellular location is the surface film. Functionally, contributes to the lung's defense against inhaled microorganisms, organic antigens and toxins. Interacts with compounds such as bacterial lipopolysaccharides, oligosaccharides and fatty acids and modulates leukocyte action in immune response. May participate in the extracellular reorganization or turnover of pulmonary surfactant. Binds strongly maltose residues and to a lesser extent other alpha-glucosyl moieties. In Bos taurus (Bovine), this protein is Pulmonary surfactant-associated protein D (SFTPD).